Consider the following 329-residue polypeptide: tRNA N6-adenosine threonylcarbamoyltransferase (329 aa).

Fe cation contacts are provided by histidine 108, histidine 112, and tyrosine 129. Substrate is bound by residues tyrosine 129–glycine 133, aspartate 161, glutamate 182, and serine 261. Aspartate 289 lines the Fe cation pocket.

It belongs to the KAE1 / TsaD family. Fe(2+) is required as a cofactor.

The protein resides in the cytoplasm. It catalyses the reaction L-threonylcarbamoyladenylate + adenosine(37) in tRNA = N(6)-L-threonylcarbamoyladenosine(37) in tRNA + AMP + H(+). In terms of biological role, required for the formation of a threonylcarbamoyl group on adenosine at position 37 (t(6)A37) in tRNAs that read codons beginning with adenine. Is probably involved in the transfer of the threonylcarbamoyl moiety of threonylcarbamoyl-AMP (TC-AMP) to the N6 group of A37. This is tRNA N6-adenosine threonylcarbamoyltransferase from Ignicoccus hospitalis (strain KIN4/I / DSM 18386 / JCM 14125).